The primary structure comprises 124 residues: Phycocyanin PC645 alpha-3 subunit (124 aa).

Arginine 71 is a (2R,3E)-phycocyanobilin binding site. The mesobiliverdin site is built by cysteine 73, tyrosine 81, and lysine 97.

This sequence belongs to the phycoerythrin family. As to quaternary structure, heterotetramer of 2 different alpha chains and 2 identical beta chains which form 2 alpha-beta heterodimers within the heterotetramer. In terms of processing, contains one phycocyanobilin chromophore and one mesobiliverdin chromophore with binding mediated by both the alpha and beta subunits.

It is found in the plastid. The protein localises to the chloroplast thylakoid membrane. Its function is as follows. Light-harvesting photosynthetic tetrapyrrole chromophore-protein from the phycobiliprotein complex. In Chroomonas sp. (strain CCMP270), this protein is Phycocyanin PC645 alpha-3 subunit.